Consider the following 781-residue polypeptide: MATQADLMELDMAMEPDRKAAVSHWQQQSYLDSGIHSGATTTAPSLSGKGNPEEEDVDTSQVLYEWEQGFSQSFTQEQVADIDGQYAMTRAQRVRAAMFPETLDEGMQIPSTQFDAAHPTNVQRLAEPSQMLKHAVVNLINYQDDAELATRAIPELTKLLNDEDQVVVNKAAVMVHQLSKKEASRHAIMRSPQMVSAIVRTMQNTNDVETARCTAGTLHNLSHHREGLLAIFKSGGIPALVKMLGSPVDSVLFYAITTLHNLLLHQEGAKMAVRLAGGLQKMVALLNKTNVKFLAITTDCLQILAYGNQESKLIILASGGPQALVNIMRTYTYEKLLWTTSRVLKVLSVCSSNKPAIVEAGGMQALGLHLTDPSQRLVQNCLWTLRNLSDAATKQEGMEGLLGTLVQLLGSDDINVVTCAAGILSNLTCNNYKNKMMVCQVGGIEALVRTVLRAGDREDITEPAICALRHLTSRHQEAEMAQNAVRLHYGLPVVVKLLHPPSHWPLIKATVGLIRNLALCPANHAPLREQGAIPRLVQLLVRAHQDTQRRTSMGGTQQQFVEGVRMEEIVEGCTGALHILARDVHNRIVIRGLNTIPLFVQLLYSPIENIQRVAAGVLCELAQDKEAAEAIEAEGATAPLTELLHSRNEGVATYAAAVLFRMSEDKPQDYKKRLSVELTSSLFRTEPMAWNETADLGLDIGAQGEPLGYRQDDPSYRSFHSGGYGQDALGMDPMMEHEMGGHHPGADYPVDGLPDLGHAQDLMDGLPPGDSNQLAWFDTDL.

N-acetylalanine is present on A2. An interaction with VCL region spans residues 2 to 23 (ATQADLMELDMAMEPDRKAAVS). Position 23 is a phosphoserine; by GSK3-beta; alternate (S23). The O-linked (GlcNAc) serine; alternate glycan is linked to S23. S29 carries the phosphoserine; by GSK3-beta modification. A phosphoserine; by GSK3-beta and HIPK2 mark is found at S33 and S37. A disordered region spans residues 34 to 57 (GIHSGATTTAPSLSGKGNPEEEDV). T41 bears the Phosphothreonine; by GSK3-beta mark. At S45 the chain carries Phosphoserine. N6-acetyllysine is present on K49. The residue at position 64 (Y64) is a Phosphotyrosine; by PTK6. Y142 bears the Phosphotyrosine; by FYN and PTK6 mark. 12 ARM repeats span residues 151 to 191 (RAIP…IMRS), 193 to 234 (QMVS…IFKS), 235 to 276 (GGIP…VRLA), 277 to 318 (GGLQ…ILAS), 319 to 360 (GGPQ…IVEA), 361 to 389 (GGMQ…RNLS), 400 to 441 (GLLG…VCQV), 442 to 484 (GGIE…AQNA), 489 to 530 (YGLP…LREQ), 531 to 571 (GAIP…EIVE), 594 to 636 (NTIP…AEGA), and 637 to 666 (TAPL…SEDK). An interaction with BCL9 region spans residues 156–178 (LTKLLNDEDQVVVNKAAVMVHQL). At S191 the chain carries Phosphoserine; by CDK5. At S246 the chain carries Phosphoserine; by CDK5. At Y331 the chain carries Phosphotyrosine; by PTK6. Y333 carries the phosphotyrosine; by SRC and PTK6 modification. S552 bears the Phosphoserine mark. T556 is subject to (Microbial infection) Phosphothreonine. Phosphothreonine is present on T556. C619 is modified (S-nitrosocysteine). S675 is modified (phosphoserine). The tract at residues 705–781 (EPLGYRQDDP…NQLAWFDTDL (77 aa)) is disordered. Residues 734–745 (MMEHEMGGHHPG) show a composition bias toward basic and acidic residues. The tract at residues 772 to 781 (NQLAWFDTDL) is interaction with SCRIB.

The protein belongs to the beta-catenin family. In terms of assembly, two separate complex-associated pools are found in the cytoplasm. The majority is present as component of an E-cadherin:catenin adhesion complex composed of at least E-cadherin/CDH1 and beta-catenin/CTNNB1, and possibly alpha-catenin/CTNNA1; the complex is located to adherens junctions. The stable association of CTNNA1 is controversial as CTNNA1 was shown not to bind to F-actin when assembled in the complex. Alternatively, the CTNNA1-containing complex may be linked to F-actin by other proteins such as LIMA1. Another cytoplasmic pool is part of a large complex containing AXIN1, AXIN2, APC, CSNK1A1 and GSK3B that promotes phosphorylation on N-terminal Ser and Thr residues and ubiquitination of CTNNB1 via BTRC and its subsequent degradation by the proteasome. Wnt-dependent activation of DVL antagonizes the action of GSK3B. When GSK3B activity is inhibited the complex dissociates, CTNNB1 is dephosphorylated and is no longer targeted for destruction. The stabilized protein translocates to the nucleus, where it binds TCF/LEF-1 family members, BCL9, BCL9L and possibly also RUVBL1 and CHD8. Binds CTNNBIP and EP300. CTNNB1 forms a ternary complex with LEF1 and EP300 that is disrupted by CTNNBIP1 binding. Interacts with TAX1BP3 (via the PDZ domain); this interaction inhibits the transcriptional activity of CTNNB1. Interacts with AJAP1, BAIAP1, CARM1, CTNNA3, CXADR and PCDH11Y. Binds NHERF1. Interacts with GLIS2 and MUC1. Interacts with SLC30A9. Interacts with XIRP1. Interacts directly with AXIN1; the interaction is regulated by CDK2 phosphorylation of AXIN1. Interacts with SCRIB. Interacts with RAPGEF2. Interacts with PTPRU (via the cytoplasmic juxtamembrane domain). Interacts with EMD. Interacts with TNIK and TCF7L2. Interacts with SESTD1 and TRPC4. Interacts with CAV1. Interacts with TRPV4. The TRPV4 and CTNNB1 complex can interact with CDH1. Interacts with VCL. Interacts with PTPRJ. Interacts with PKT7 and CDK2. Interacts with FAT1 (via the cytoplasmic domain). Interacts with NANOS1 and NDRG2. Interacts with isoform 1 of NEK2. Interacts with both isoform 1 and isoform 2 of CDK5. Interacts with PTK6. Interacts with SOX7; this interaction may lead to proteasomal degradation of active CTNNB1 and thus inhibition of Wnt/beta-catenin-stimulated transcription. Identified in a complex with HINT1 and MITF. Interacts with FHIT. The CTNNB1 and TCF7L2/TCF4 complex interacts with PML (isoform PML-4). Interacts with FERMT2. Identified in a complex with TCF7L2/TCF4 and FERMT2. Interacts with RORA. May interact with P-cadherin/CDH3. Interacts with RNF220. Interacts with CTNND2. Interacts (via the C-terminal region) with CBY1. The complex composed, at least, of APC, CTNNB1 and GSK3B interacts with JPT1; the interaction requires the inactive form of GSK3B (phosphorylated at 'Ser-9'). Interacts with DLG5. Interacts with FAM53B; promoting translocation to the nucleus. Interacts with TMEM170B. Interacts with AHI1. Interacts with GID8. Component of an cadherin:catenin adhesion complex composed of at least of CDH26, beta-catenin/CTNNB1, alpha-catenin/CTNNA1 and p120 catenin/CTNND1. Forms a complex comprising APPL1, RUVBL2, APPL2, HDAC1 and HDAC2. Interacts with IRF2BPL; mediates the ubiquitination and degradation of CTNNB1. Interacts with AMFR. Interacts with LMBR1L. Interacts with SOX30; prevents interaction of CTNNB1 with TCF7L2/TCF4 and leads to inhibition of Wnt signaling. Interacts with SOX9; inhibiting CTNNB1 activity by competing with the binding sites of TCF/LEF within CTNNB1, thereby inhibiting the Wnt signaling. Interacts with SPN/CD43 cytoplasmic tail. Interacts (when phosphorylated at Tyr-333) with isoform M2 of PKM (PKM2); promoting transcription activation. Interacts with PKP2 (via HEAD domain). Interacts with CDH1. Interacts (when unphosphorylated) with FLYWCH1, perhaps preventing interaction of CTNNB1 with TCF4, and thereby regulating transcription activation; phosphorylation of CTNNB1 may inhibit the interaction. Interacts (via the central armadillo domains) with probable transcriptional regulator ADNP (via N-terminal region); interaction is direct and stabilizes CTNNB1 by modulating its phosphorylation by glycogen synthase kinase-3 beta GSK3B. Interacts with NR5A2. Interacts with DSG2; the interaction promotes localization of CTNNB1 at cell junctions thus reducing its nuclear localization and subsequent transcription of CTNNB1/TCF-target genes. (Microbial infection) Interacts with herpes virus 8 protein vPK; this interaction inhibits the Wnt signaling pathway. Post-translationally, phosphorylation at Ser-552 by AMPK promotes stabilization of the protein, enhancing TCF/LEF-mediated transcription. Phosphorylation by GSK3B requires prior phosphorylation of Ser-45 by another kinase. Phosphorylation proceeds then from Thr-41 to Ser-37 and Ser-33. Phosphorylated by NEK2. EGF stimulates tyrosine phosphorylation. Phosphorylated on Ser-33 and Ser-37 by HIPK2 and GSK3B, this phosphorylation triggers proteasomal degradation. Phosphorylation on Ser-191 and Ser-246 by CDK5. Phosphorylation by CDK2 regulates insulin internalization. Phosphorylation by PTK6 at Tyr-64, Tyr-142, Tyr-331 and/or Tyr-333 with the predominant site at Tyr-64 is not essential for inhibition of transcriptional activity. Phosphorylation by SRC at Tyr-333 promotes interaction with isoform M2 of PKM (PKM2); promoting transcription activation. In terms of processing, ubiquitinated by the SCF(BTRC) E3 ligase complex when phosphorylated by GSK3B, leading to its degradation. Ubiquitinated by a E3 ubiquitin ligase complex containing UBE2D1, SIAH1, CACYBP/SIP, SKP1, APC and TBL1X, leading to its subsequent proteasomal degradation. Ubiquitinated and degraded following interaction with SOX9. Ubiquitinated via 'Lys-11'- and 'Lys-29'-linked ubiquitin chains by UBR5, leading to its stabilization. S-nitrosylation at Cys-619 within adherens junctions promotes VEGF-induced, NO-dependent endothelial cell permeability by disrupting interaction with E-cadherin, thus mediating disassembly adherens junctions. Post-translationally, O-glycosylation at Ser-23 decreases nuclear localization and transcriptional activity, and increases localization to the plasma membrane and interaction with E-cadherin CDH1. In terms of processing, deacetylated at Lys-49 by SIRT1. Phosphorylated at Thr-556 by herpes virus 1/HHV-1 leading to CTNNB1 inhibition. Expressed in several hair follicle cell types: basal and peripheral matrix cells, and cells of the outer and inner root sheaths. Expressed in colon. Present in cortical neurons (at protein level). Expressed in breast cancer tissues (at protein level).

The protein resides in the cytoplasm. Its subcellular location is the nucleus. The protein localises to the cytoskeleton. It localises to the cell junction. It is found in the adherens junction. The protein resides in the cell membrane. Its subcellular location is the microtubule organizing center. The protein localises to the centrosome. It localises to the spindle pole. It is found in the synapse. The protein resides in the cilium basal body. Functionally, key downstream component of the canonical Wnt signaling pathway. In the absence of Wnt, forms a complex with AXIN1, AXIN2, APC, CSNK1A1 and GSK3B that promotes phosphorylation on N-terminal Ser and Thr residues and ubiquitination of CTNNB1 via BTRC and its subsequent degradation by the proteasome. In the presence of Wnt ligand, CTNNB1 is not ubiquitinated and accumulates in the nucleus, where it acts as a coactivator for transcription factors of the TCF/LEF family, leading to activate Wnt responsive genes. Also acts as a coactivator for other transcription factors, such as NR5A2. Promotes epithelial to mesenchymal transition/mesenchymal to epithelial transition (EMT/MET) via driving transcription of CTNNB1/TCF-target genes. Involved in the regulation of cell adhesion, as component of an E-cadherin:catenin adhesion complex. Acts as a negative regulator of centrosome cohesion. Involved in the CDK2/PTPN6/CTNNB1/CEACAM1 pathway of insulin internalization. Blocks anoikis of malignant kidney and intestinal epithelial cells and promotes their anchorage-independent growth by down-regulating DAPK2. Disrupts PML function and PML-NB formation by inhibiting RANBP2-mediated sumoylation of PML. Promotes neurogenesis by maintaining sympathetic neuroblasts within the cell cycle. Involved in chondrocyte differentiation via interaction with SOX9: SOX9-binding competes with the binding sites of TCF/LEF within CTNNB1, thereby inhibiting the Wnt signaling. Acts as a positive regulator of odontoblast differentiation during mesenchymal tooth germ formation, via promoting the transcription of differentiation factors such as LEF1, BMP2 and BMP4. Activity is repressed in a MSX1-mediated manner at the bell stage of mesenchymal tooth germ formation which prevents premature differentiation of odontoblasts. This is Catenin beta-1 from Homo sapiens (Human).